The primary structure comprises 54 residues: Large ribosomal subunit protein bL33 (54 aa).

This sequence belongs to the bacterial ribosomal protein bL33 family.

The protein is Large ribosomal subunit protein bL33 of Corynebacterium jeikeium (strain K411).